We begin with the raw amino-acid sequence, 299 residues long: S-formylglutathione hydrolase (299 aa).

Residues methionine 1 and histidine 140 each contribute to the Cu cation site. Residues serine 161, aspartate 241, and histidine 276 each act as charge relay system in the active site.

It belongs to the esterase D family. In terms of assembly, monomer.

It is found in the cytoplasm. The enzyme catalyses S-formylglutathione + H2O = formate + glutathione + H(+). In terms of biological role, serine hydrolase involved in the detoxification of formaldehyde. The polypeptide is S-formylglutathione hydrolase (Saccharomyces cerevisiae (strain ATCC 204508 / S288c) (Baker's yeast)).